An 80-amino-acid polypeptide reads, in one-letter code: DDDHSDDEPRESESSKPCCSSCCTRSRPPQCQCTDVRLNSCHSACKSCMCTFSDPGMCSCLDVTDFCYKPCKSSGDDDZZ.

Over residues 1–10 (DDDHSDDEPR) the composition is skewed to acidic residues. The segment at 1–29 (DDDHSDDEPRESESSKPCCSSCCTRSRPP) is disordered. Over residues 15–29 (SKPCCSSCCTRSRPP) the composition is skewed to low complexity. 7 disulfides stabilise this stretch: Cys18-Cys71, Cys19-Cys33, Cys22-Cys67, Cys23-Cys31, Cys41-Cys48, Cys45-Cys60, and Cys50-Cys58.

This sequence belongs to the Bowman-Birk serine protease inhibitor family.

The sequence is that of Bowman-Birk type proteinase inhibitor DE-4 from Philenoptera violacea (Apple-leaf).